Consider the following 245-residue polypeptide: Orotidine 5'-phosphate decarboxylase (245 aa).

Residues aspartate 22, lysine 44, 71–80 (DLKFHDIPNT), threonine 131, arginine 192, glutamine 201, glycine 221, and arginine 222 contribute to the substrate site. The active-site Proton donor is the lysine 73.

The protein belongs to the OMP decarboxylase family. Type 1 subfamily. As to quaternary structure, homodimer.

The catalysed reaction is orotidine 5'-phosphate + H(+) = UMP + CO2. It participates in pyrimidine metabolism; UMP biosynthesis via de novo pathway; UMP from orotate: step 2/2. In terms of biological role, catalyzes the decarboxylation of orotidine 5'-monophosphate (OMP) to uridine 5'-monophosphate (UMP). This Yersinia pestis bv. Antiqua (strain Antiqua) protein is Orotidine 5'-phosphate decarboxylase.